A 140-amino-acid chain; its full sequence is Peptidyl-prolyl cis-trans isomerase FKBP2 (140 aa).

The N-terminal stretch at 1–22 (MRLSWILTILSICLSALAAATG) is a signal peptide. The PPIase FKBP-type domain occupies 47–135 (GDVLHMHYTG…VFEVELLKIE (89 aa)). The Prevents secretion from ER motif lies at 137 to 140 (RSEL).

The protein belongs to the FKBP-type PPIase family. FKBP2 subfamily. As to quaternary structure, interacts with ARFGEF1/BIG1 and the C-terminal of EPB41L2.

The protein localises to the endoplasmic reticulum membrane. It catalyses the reaction [protein]-peptidylproline (omega=180) = [protein]-peptidylproline (omega=0). With respect to regulation, inhibited by both FK506 and rapamycin. In terms of biological role, PPIases accelerate the folding of proteins. It catalyzes the cis-trans isomerization of proline imidic peptide bonds in oligopeptides. The polypeptide is Peptidyl-prolyl cis-trans isomerase FKBP2 (Fkbp2) (Mus musculus (Mouse)).